The sequence spans 389 residues: Succinate--CoA ligase [ADP-forming] subunit beta (389 aa).

Positions 9 to 244 (KEILRKFGVA…LDEEDPAEVE (236 aa)) constitute an ATP-grasp domain. Residues Lys46, 53–55 (GRG), Glu99, Ala102, and Glu107 each bind ATP. Mg(2+)-binding residues include Asn199 and Asp213. Substrate contacts are provided by residues Asn264 and 321 to 323 (GIM).

It belongs to the succinate/malate CoA ligase beta subunit family. Heterotetramer of two alpha and two beta subunits. The cofactor is Mg(2+).

The catalysed reaction is succinate + ATP + CoA = succinyl-CoA + ADP + phosphate. The enzyme catalyses GTP + succinate + CoA = succinyl-CoA + GDP + phosphate. It functions in the pathway carbohydrate metabolism; tricarboxylic acid cycle; succinate from succinyl-CoA (ligase route): step 1/1. Succinyl-CoA synthetase functions in the citric acid cycle (TCA), coupling the hydrolysis of succinyl-CoA to the synthesis of either ATP or GTP and thus represents the only step of substrate-level phosphorylation in the TCA. The beta subunit provides nucleotide specificity of the enzyme and binds the substrate succinate, while the binding sites for coenzyme A and phosphate are found in the alpha subunit. This is Succinate--CoA ligase [ADP-forming] subunit beta from Paraburkholderia xenovorans (strain LB400).